The primary structure comprises 140 residues: Large ribosomal subunit protein uL11 (140 aa).

It belongs to the universal ribosomal protein uL11 family. Part of the ribosomal stalk of the 50S ribosomal subunit. Interacts with L10 and the large rRNA to form the base of the stalk. L10 forms an elongated spine to which L12 dimers bind in a sequential fashion forming a multimeric L10(L12)X complex. Post-translationally, one or more lysine residues are methylated.

Functionally, forms part of the ribosomal stalk which helps the ribosome interact with GTP-bound translation factors. The protein is Large ribosomal subunit protein uL11 of Staphylococcus epidermidis (strain ATCC 35984 / DSM 28319 / BCRC 17069 / CCUG 31568 / BM 3577 / RP62A).